The following is a 221-amino-acid chain: Lipoprotein-releasing system ATP-binding protein LolD (221 aa).

One can recognise an ABC transporter domain in the interval 8–220 (LKMISKHYKQ…YNLKHGLLNI (213 aa)). Position 42–49 (42–49 (GSSGSGKS)) interacts with ATP.

This sequence belongs to the ABC transporter superfamily. Lipoprotein translocase (TC 3.A.1.125) family. The complex is composed of two ATP-binding proteins (LolD) and two transmembrane proteins (LolC and LolE).

It localises to the cell inner membrane. Its function is as follows. Part of the ABC transporter complex LolCDE involved in the translocation of mature outer membrane-directed lipoproteins, from the inner membrane to the periplasmic chaperone, LolA. Responsible for the formation of the LolA-lipoprotein complex in an ATP-dependent manner. The polypeptide is Lipoprotein-releasing system ATP-binding protein LolD (Rickettsia prowazekii (strain Madrid E)).